The primary structure comprises 77 residues: Lantipeptide prochlorosin 4.3 (77 aa).

The propeptide occupies 1–64 (MSEEQLKAFI…DDELEGVAGG (64 aa)). A 2,3-didehydrobutyrine modification is found at T65. Positions 67–70 (SGGC) form a cross-link, lanthionine (Ser-Cys). The beta-methyllanthionine (Thr-Cys) cross-link spans 72-76 (TSMFC).

Post-translationally, cross-links are proved in vitro, when coepressed in E.coli with the ProcM lanthionine synthetase. The lanthionine residue has both a DL configuration (with 2S,6R stereochemistry) and a LL configuration (with 2R,6R stereochemistry). DL and LL diastomers have a 4:1 ratio. It is unknown whether nonenzymatic cyclization occur, but authors favor a model in which ProcM does generate all thioether cross-links. The beta-methyllanthionine residue has a DL configuration (with 2S,3S,6R stereochemistry). In terms of processing, maturation of prochlorosin involves the enzymatic conversion of Thr, and Ser into dehydrated AA and the formation of thioether bonds with cysteines. This is followed by membrane translocation and cleavage of the modified precursor.

Its subcellular location is the secreted. Its function is as follows. Lanthionine-containing peptide (lantipeptide) with unknown function. Does not show antibiotic activity against Lactococcus lactis 117 and Bacillus subtilis 6633 bacteria. Organisms that produce this peptide live in oligotrophic environments at very dilute concentrations, suggesting this peptide is not secreted to influence other bacteria. The polypeptide is Lantipeptide prochlorosin 4.3 (Prochlorococcus marinus (strain MIT 9313)).